The primary structure comprises 255 residues: Small ribosomal subunit protein eS1 (255 aa).

Residues 1–18 (MAVGKNKRLSKGKKGLKK) are compositionally biased toward basic residues. The tract at residues 1–28 (MAVGKNKRLSKGKKGLKKRTQDPFSRKD) is disordered. A2 is modified (N-acetylalanine; partial). A compositionally biased stretch (basic and acidic residues) spans 19 to 28 (RTQDPFSRKD).

It belongs to the eukaryotic ribosomal protein eS1 family. Component of the small ribosomal subunit. Mature ribosomes consist of a small (40S) and a large (60S) subunit. The 40S subunit contains about 33 different proteins and 1 molecule of RNA (18S). The 60S subunit contains about 49 different proteins and 3 molecules of RNA (25S, 5.8S and 5S).

It is found in the cytoplasm. This chain is Small ribosomal subunit protein eS1, found in Ajellomyces capsulatus (strain H143) (Darling's disease fungus).